The sequence spans 590 residues: Phosphomethylpyrimidine synthase (590 aa).

Substrate contacts are provided by residues Asn197, Met226, Tyr255, His291, 311–313, 352–355, and Glu391; these read SRG and DGLR. His395 is a binding site for Zn(2+). Residue Tyr418 participates in substrate binding. His459 provides a ligand contact to Zn(2+). Residues Cys539, Cys542, and Cys547 each coordinate [4Fe-4S] cluster.

This sequence belongs to the ThiC family. [4Fe-4S] cluster serves as cofactor.

It carries out the reaction 5-amino-1-(5-phospho-beta-D-ribosyl)imidazole + S-adenosyl-L-methionine = 4-amino-2-methyl-5-(phosphooxymethyl)pyrimidine + CO + 5'-deoxyadenosine + formate + L-methionine + 3 H(+). The protein operates within cofactor biosynthesis; thiamine diphosphate biosynthesis. In terms of biological role, catalyzes the synthesis of the hydroxymethylpyrimidine phosphate (HMP-P) moiety of thiamine from aminoimidazole ribotide (AIR) in a radical S-adenosyl-L-methionine (SAM)-dependent reaction. The chain is Phosphomethylpyrimidine synthase from Bacillus velezensis (strain DSM 23117 / BGSC 10A6 / LMG 26770 / FZB42) (Bacillus amyloliquefaciens subsp. plantarum).